A 445-amino-acid polypeptide reads, in one-letter code: Probable fructoselysine/psicoselysine transporter FrlA (445 aa).

11 helical membrane passes run 10-32 (LGFWAVLAIAVGTTVGSGIFVSV), 39-61 (AGTPWLTVLAFVIGGLIVIPQMC), 97-119 (FWANDAPSLSIMALAIVSNLGFL), 126-143 (LGKFIAAGLIIAFMLLHL), 153-175 (QTLITIAKIIPFTIVIGLGIFWF), 188-210 (IGATGSFMALLAGISATSWSYTG), 230-252 (RALIGSCLLVLVLYTLLALVISG), 272-294 (WIPALGSTAGIFVAITAMIVILG), 341-363 (GIFFIFVSDLTSLLGYFTLVMCF), 384-406 (LWRTPAFGLMTPLAIASSLILVA), and 411-433 (WAPIPGLICAVIVIATGLPAYAF).

It belongs to the amino acid-polyamine-organocation (APC) superfamily.

The protein resides in the cell inner membrane. It catalyses the reaction N(6)-(D-fructosyl)-L-lysine(in) = N(6)-(D-fructosyl)-L-lysine(out). The enzyme catalyses N(6)-(D-psicosyl)-L-lysine(in) = N(6)-(D-psicosyl)-L-lysine(out). It participates in carbohydrate metabolism; fructoselysine degradation. Its function is as follows. Is likely involved in the transport of fructoselysine and psicoselysine to the cytoplasm, where they are degraded. The chain is Probable fructoselysine/psicoselysine transporter FrlA (frlA) from Escherichia coli O157:H7.